A 167-amino-acid polypeptide reads, in one-letter code: Ribosome maturation factor RimM (167 aa).

The region spanning 92–166 is the PRC barrel domain; that stretch reads DDEFYHADLI…RIVADPPEEQ (75 aa).

Belongs to the RimM family. As to quaternary structure, binds ribosomal protein uS19.

It is found in the cytoplasm. An accessory protein needed during the final step in the assembly of 30S ribosomal subunit, possibly for assembly of the head region. Essential for efficient processing of 16S rRNA. May be needed both before and after RbfA during the maturation of 16S rRNA. It has affinity for free ribosomal 30S subunits but not for 70S ribosomes. In Paracoccus denitrificans (strain Pd 1222), this protein is Ribosome maturation factor RimM.